Reading from the N-terminus, the 644-residue chain is Chaperone protein DnaK (644 aa).

Position 199 is a phosphothreonine; by autocatalysis (T199). A disordered region spans residues 603–644 (YAKKSSEGQAAQGQTQSQESTKPAEEGVVDAEFEEVKEEDKK). The span at 609–623 (EGQAAQGQTQSQEST) shows a compositional bias: polar residues. Residues 629-644 (GVVDAEFEEVKEEDKK) show a composition bias toward acidic residues.

The protein belongs to the heat shock protein 70 family.

In terms of biological role, acts as a chaperone. The polypeptide is Chaperone protein DnaK (Legionella pneumophila (strain Corby)).